The chain runs to 119 residues: Integration host factor subunit beta (119 aa).

Positions 93–119 (AGGLADTQPDGDAPDQPQPTLLGLHAM) are disordered. The span at 97 to 112 (ADTQPDGDAPDQPQPT) shows a compositional bias: low complexity.

Belongs to the bacterial histone-like protein family. Heterodimer of an alpha and a beta chain.

Its function is as follows. This protein is one of the two subunits of integration host factor, a specific DNA-binding protein that functions in genetic recombination as well as in transcriptional and translational control. The chain is Integration host factor subunit beta from Bordetella petrii (strain ATCC BAA-461 / DSM 12804 / CCUG 43448).